Reading from the N-terminus, the 154-residue chain is Endoribonuclease YbeY (154 aa).

Zn(2+)-binding residues include H117, H121, and H127.

Belongs to the endoribonuclease YbeY family. The cofactor is Zn(2+).

The protein resides in the cytoplasm. Single strand-specific metallo-endoribonuclease involved in late-stage 70S ribosome quality control and in maturation of the 3' terminus of the 16S rRNA. This is Endoribonuclease YbeY from Aromatoleum aromaticum (strain DSM 19018 / LMG 30748 / EbN1) (Azoarcus sp. (strain EbN1)).